The sequence spans 245 residues: Triosephosphate isomerase (245 aa).

Asparagine 9–lysine 11 contacts substrate. The active-site Electrophile is the histidine 92. Glutamate 164 serves as the catalytic Proton acceptor. Residues glycine 170, serine 209, and glycine 230 to glycine 231 contribute to the substrate site.

The protein belongs to the triosephosphate isomerase family. As to quaternary structure, homodimer.

It is found in the cytoplasm. It carries out the reaction D-glyceraldehyde 3-phosphate = dihydroxyacetone phosphate. It functions in the pathway carbohydrate biosynthesis; gluconeogenesis. The protein operates within carbohydrate degradation; glycolysis; D-glyceraldehyde 3-phosphate from glycerone phosphate: step 1/1. In terms of biological role, involved in the gluconeogenesis. Catalyzes stereospecifically the conversion of dihydroxyacetone phosphate (DHAP) to D-glyceraldehyde-3-phosphate (G3P). The sequence is that of Triosephosphate isomerase from Cupriavidus necator (strain ATCC 17699 / DSM 428 / KCTC 22496 / NCIMB 10442 / H16 / Stanier 337) (Ralstonia eutropha).